The sequence spans 115 residues: Tyrosine-protein phosphatase 19 (115 aa).

A Tyrosine-protein phosphatase domain is found at 1-115; sequence WLMIVEQKCR…ETGSDAPMVV (115 aa). Asp83 contributes to the substrate binding site.

It belongs to the protein-tyrosine phosphatase family.

It catalyses the reaction O-phospho-L-tyrosyl-[protein] + H2O = L-tyrosyl-[protein] + phosphate. The protein is Tyrosine-protein phosphatase 19 (STY-19) of Styela plicata (Wrinkled sea squirt).